The primary structure comprises 198 residues: MSLSIPDAFSFFKLSCGSWVSQRSSHHLLHRRAEPGASLIVVKELSATDDRLLSVAKLHQKNPNMLVGGCWVRWSGSMAWDQEGESHEGESIFGLIPTDENGREGLLLRDRGYAETAPVAGKFQMDEHDALLLSTSYDTMISNERFWFTGPDIRLRTSVVEGLSNTASFCIETRREYKAILNDNLNTNNDLMHSKFGW.

The protein belongs to the CpcS/CpeS biliprotein lyase family.

It is found in the plastid. The protein localises to the organellar chromatophore. Functionally, covalently attaches a chromophore to Cys residue(s) of phycobiliproteins. In Paulinella chromatophora, this protein is Chromophore lyase CpcS/CpeS 2.